The primary structure comprises 372 residues: 4-hydroxy-3-methylbut-2-en-1-yl diphosphate synthase (flavodoxin) (372 aa).

Positions 270, 273, 305, and 312 each coordinate [4Fe-4S] cluster.

Belongs to the IspG family. The cofactor is [4Fe-4S] cluster.

The enzyme catalyses (2E)-4-hydroxy-3-methylbut-2-enyl diphosphate + oxidized [flavodoxin] + H2O + 2 H(+) = 2-C-methyl-D-erythritol 2,4-cyclic diphosphate + reduced [flavodoxin]. The protein operates within isoprenoid biosynthesis; isopentenyl diphosphate biosynthesis via DXP pathway; isopentenyl diphosphate from 1-deoxy-D-xylulose 5-phosphate: step 5/6. Its function is as follows. Converts 2C-methyl-D-erythritol 2,4-cyclodiphosphate (ME-2,4cPP) into 1-hydroxy-2-methyl-2-(E)-butenyl 4-diphosphate. The protein is 4-hydroxy-3-methylbut-2-en-1-yl diphosphate synthase (flavodoxin) of Escherichia coli O139:H28 (strain E24377A / ETEC).